We begin with the raw amino-acid sequence, 170 residues long: MLSYYAFIFFAKIMEVALMTIRTVLITRGEKLYGSIIGFIEVTIWLYVTSSVLSGIKDDPIRMVVYALGFTCGNYMGCVIEEKLAIGLLTINVITSESDGKRLAEILRDKNVGVTMVDAEGKIEQKKMLIIHAKRKRREEIIRTIEGSDINAMISVNDIKTVYGGYGIRK.

2 helical membrane-spanning segments follow: residues 1–21 and 36–56; these read MLSY…LMTI and IIGF…LSGI.

Belongs to the UPF0316 family.

The protein localises to the cell membrane. This Clostridium botulinum (strain 657 / Type Ba4) protein is UPF0316 protein CLJ_B0679.